A 414-amino-acid polypeptide reads, in one-letter code: O-methyltransferase sirM (414 aa).

Asp270 is an S-adenosyl-L-methionine binding site. His321 (proton acceptor) is an active-site residue.

The protein belongs to the class I-like SAM-binding methyltransferase superfamily. Cation-independent O-methyltransferase family. COMT subfamily.

It functions in the pathway mycotoxin biosynthesis. Its function is as follows. O-methyltransferase; part of the gene cluster that mediates the biosynthesis of sirodesmin PL, an epipolythiodioxopiperazine (ETP) characterized by a disulfide bridged cyclic dipeptide and that acts as a phytotoxin which is involved in the blackleg didease of canola. SirD catalyzes the O-prenylation of L-tyrosine (L-Tyr) in the presence of dimethylallyl diphosphate (DMAPP) to yield 4-O-dimethylallyl-L-Tyr, and therefore represents probably the first pathway-specific enzyme in the biosynthesis of sirodesmin PL. 4-O-dimethylallyl-L-Tyr, then undergoes condensation with L-Ser in a reaction catalyzed by the non-ribosomal peptide synthase sirP to form the diketopiperazine (DKP) backbone. Further bishydroxylation of the DKP performed by the cytochrome P450 monooxygenase sirC leads to the production of the intermediate phomamide. This step is essential to form the reactive thiol group required for toxicity of sirodesmin PL. The next steps of sirodesmin biosynthesis are not well understood yet, but some predictions could be made from intermediate compounds identification. Phomamide is converted into phomalizarine via oxidation, probably by sirT. Further oxidation, methylation (by sirM or sirN) and reduction steps convert phomalizarine to deacetyl sirodesmin. Finally, acetyltransferase sirH probably acetylates deacetyl sirodesmin to produce sirodesmin PL. The polypeptide is O-methyltransferase sirM (Leptosphaeria maculans (Blackleg fungus)).